The primary structure comprises 928 residues: MLQRAASNAYSWWWASHIRTKQSKWLEHNLQDMEEKVKYTLKIIDGDGDSFAKRAEMYYRKRPEIVNFVEEAFRSYRALAERYDHLSTELQSANHMIATAFPEHVPFPLVDDDDDDDDDNPKKPPKHLHLIPSGTNIPQVPEVPKKEFKSQSLMVLSRKEPGVLQSSETSSALVSSGLSREEALEEIDKIHKGILVLQTEKEFVRSSYEQSYDRYWNLENEVEEMQKRVCSLQDEFGVGGEIEDGEARTLVATAALSSCKETIAKLEETQKRFSEDAGIEKERIDTATERCEALKKKFEIKVEEQAKKAFHGQESSYESVKESRQIDLNENLSNVDFAEKIDELVEKVVSLETTALSHTALLKTLRSETNELQDHIRDVEKDKACLVSDSMDMKKRITVLEDELRKVKNLFQRVEDQNKNLHKHLTEANSTAKDLSGKLQEVKMDEDVEGDGLNPEDIQEEDTVEDSDSISNEREIKNAEEIKEAMVIKQSRDQESMQEEKSETRDSCGGLSETESTCFGTEAEDEERRNWRQLLPADGMEDREKVLLDEYSSVLRDYREVKRKLSEVEKKNRDGFFELALQLRELKNAVSCEDVDFHFLHQKPELPGQGFPHPVERNRAESVSISHSSNSSFSMPPLPQRGDLKRASEQEKEDGFKVKFAGISDSLRKKIPTVEEKVRGDIDAVLEENIEFWLRFSTSVHQIQKYHTSVQDLKAELSKIESKQQGNAGSSSNTALASEAKPIYRHLREIRTELQLWLENSAILRDELEGRYATLCNIKDEVSRVTSQSGATEVSNTEIRGYQAAKFHGEILNMKQENKRVFNELQAGLDRARALRAEVERVVCKLEENLGILDGTATRSLSKRMPSSAGKPRIPLRSFLFGVKLKKYKQQPKQTSTIFSCVSPSPALNKQCSYIIPPAKLPEYVKRS.

The region spanning 10 to 90 (YSWWWASHIR…ERYDHLSTEL (81 aa)) is the NAB domain. Positions 108 to 144 (PLVDDDDDDDDDNPKKPPKHLHLIPSGTNIPQVPEVP) are disordered. Positions 110-119 (VDDDDDDDDD) are enriched in acidic residues. Coiled-coil stretches lie at residues 207 to 309 (SYEQ…AKKA) and 360 to 445 (ALLK…VKMD). Disordered stretches follow at residues 447–472 (DVEG…SISN) and 489–529 (KQSR…EERR). Acidic residues predominate over residues 457-468 (DIQEEDTVEDSD). Residues 489–506 (KQSRDQESMQEEKSETRD) show a composition bias toward basic and acidic residues. Residues 547–574 (LLDEYSSVLRDYREVKRKLSEVEKKNRD) are a coiled coil. Residues 620 to 651 (AESVSISHSSNSSFSMPPLPQRGDLKRASEQE) form a disordered region. Residues 622-634 (SVSISHSSNSSFS) show a composition bias toward low complexity. The span at 642–651 (GDLKRASEQE) shows a compositional bias: basic and acidic residues.

It belongs to the NET family.

Functionally, plant-specific actin binding protein. May be part of a membrane-cytoskeletal adapter complex. In Arabidopsis thaliana (Mouse-ear cress), this protein is Protein NETWORKED 2B.